Here is an 861-residue protein sequence, read N- to C-terminus: Bifunctional uridylyltransferase/uridylyl-removing enzyme (861 aa).

The uridylyltransferase stretch occupies residues 1 to 322 (MHTAAAATPA…FPTELGITRT (322 aa)). The segment at 323 to 679 (INGRFVERQG…ARISPVGEGL (357 aa)) is uridylyl-removing. An HD domain is found at 441–557 (VDQHILMVVR…RHFADQVGSE (117 aa)). ACT domains are found at residues 680–763 (QVAV…AEPP) and 792–861 (LLSL…ALAI).

Belongs to the GlnD family. Mg(2+) is required as a cofactor.

It carries out the reaction [protein-PII]-L-tyrosine + UTP = [protein-PII]-uridylyl-L-tyrosine + diphosphate. The enzyme catalyses [protein-PII]-uridylyl-L-tyrosine + H2O = [protein-PII]-L-tyrosine + UMP + H(+). With respect to regulation, uridylyltransferase (UTase) activity is inhibited by glutamine, while glutamine activates uridylyl-removing (UR) activity. In terms of biological role, modifies, by uridylylation and deuridylylation, the PII regulatory proteins (GlnB and homologs), in response to the nitrogen status of the cell that GlnD senses through the glutamine level. Under low glutamine levels, catalyzes the conversion of the PII proteins and UTP to PII-UMP and PPi, while under higher glutamine levels, GlnD hydrolyzes PII-UMP to PII and UMP (deuridylylation). Thus, controls uridylylation state and activity of the PII proteins, and plays an important role in the regulation of nitrogen assimilation and metabolism. The protein is Bifunctional uridylyltransferase/uridylyl-removing enzyme of Ralstonia nicotianae (strain ATCC BAA-1114 / GMI1000) (Ralstonia solanacearum).